The following is a 191-amino-acid chain: Vascular endothelial growth factor A (191 aa).

Residues 1–26 form the signal peptide; it reads MNFLLTWIHWGLAALLYFHNAKVLQA. 3 cysteine pairs are disulfide-bonded: Cys52–Cys94, Cys83–Cys128, and Cys87–Cys130. The N-linked (GlcNAc...) asparagine glycan is linked to Asn101.

Belongs to the PDGF/VEGF growth factor family. In terms of assembly, homodimer; disulfide-linked. Also found as heterodimer with PGF. In terms of tissue distribution, expressed by the venom gland, and probably other tissues.

The protein resides in the secreted. Its function is as follows. Growth factor active in angiogenesis, vasculogenesis and endothelial cell growth. Induces endothelial cell proliferation, promotes cell migration, inhibits apoptosis and induces permeabilization of blood vessels. Binds to heparan sulfate and heparin. This chain is Vascular endothelial growth factor A, found in Bitis gabonica (Gaboon adder).